A 1125-amino-acid chain; its full sequence is Tip elongation aberrant protein 3 (1125 aa).

Kelch repeat units lie at residues 73–123 (FMYL…CSAD), 124–179 (TIYL…LVDS), 181–226 (LWIF…KANM), 259–308 (KIFV…TIDD), and 310–360 (VYIY…SKNN). A phosphoserine mark is found at Ser430, Ser437, Ser460, Ser523, Ser980, Ser982, Ser983, Ser984, Ser1078, and Ser1080. The interval 507–530 (PLPNGNDTISRSSESSSPINESES) is disordered. The span at 515–530 (ISRSSESSSPINESES) shows a compositional bias: low complexity.

The protein resides in the cell tip. In terms of biological role, acts as a cell end marker required for efficient new end take-off (NETO), whereby growth is activated at the cell end to generate bipolarity in extending cells. Also required for proper placement of the septum. This is Tip elongation aberrant protein 3 (tea3) from Schizosaccharomyces pombe (strain 972 / ATCC 24843) (Fission yeast).